The chain runs to 346 residues: 2,5-dichlorohydroquinone reductive dechlorinase (346 aa).

The GST N-terminal domain occupies 43–154; sequence PRFELFHFVF…YLCDALSGGT (112 aa). The 147-residue stretch at 189–335 folds into the GST C-terminal domain; sequence DRRPESMQAV…AIIQWPGHPP (147 aa).

This sequence belongs to the GST superfamily.

It catalyses the reaction 2,5-dichlorohydroquinone + 2 glutathione = chlorohydroquinone + glutathione disulfide + chloride + H(+). The catalysed reaction is chlorohydroquinone + 2 glutathione = hydroquinone + glutathione disulfide + chloride + H(+). It participates in xenobiotic degradation; gamma-hexachlorocyclohexane degradation. Its function is as follows. Catalyzes the degradation of 2,5-dichlorohydroquinone (2,5-DCHQ) into hydroquinone (HQ) via chlorohydroquinone (CHQ). This is 2,5-dichlorohydroquinone reductive dechlorinase from Sphingobium indicum (strain DSM 16412 / CCM 7286 / MTCC 6364 / B90A).